Consider the following 473-residue polypeptide: Histone-lysine N-methyltransferase ATXR2 (473 aa).

In terms of domain architecture, SET spans lysine 33–isoleucine 441. The segment at glutamate 134 to cysteine 203 adopts an MYND-type; degenerate zinc-finger fold. Zn(2+) is bound by residues cysteine 176, cysteine 180, histidine 199, and cysteine 203. Tyrosine 440 is an S-adenosyl-L-methionine binding site.

This sequence belongs to the class V-like SAM-binding methyltransferase superfamily. Histone-lysine methyltransferase family. TRX/MLL subfamily. As to quaternary structure, interacts with JMJ30. Binds to ARF7 and ARF19 in the nucleus.

Its subcellular location is the nucleus. The enzyme catalyses L-lysyl-[histone] + S-adenosyl-L-methionine = N(6)-methyl-L-lysyl-[histone] + S-adenosyl-L-homocysteine + H(+). Its function is as follows. Histone methyltransferase that methylates 'Lys-36' (H3K36me) of histone H3 to produce H3K36me3. Promotes early stages of cellular dedifferentiation through H3K36me3-dependent, and to a lesser degree H3K4me3-dependent, activation of Lateral organ Boundaries-Domain (LBD) (e.g. LBD16 and LBD29) genes. Positive regulator of root organogenesis including lateral root formation as well as adventitious root formation from wounded leaf tissues. Recruited by JMJ30/ARF (e.g. ARF7 and ARF19) complexes to promote the deposition of H3K36me3 and, to a lower extent, H3K4me3 at LBD genes promoters, thus ensuring their stable activation during callus formation on callus-inducing medium (CIM). This chain is Histone-lysine N-methyltransferase ATXR2, found in Arabidopsis thaliana (Mouse-ear cress).